A 260-amino-acid polypeptide reads, in one-letter code: 3'-5' ssDNA/RNA exonuclease TatD (260 aa).

Residues E92, H128, and H153 each coordinate a divalent metal cation.

This sequence belongs to the metallo-dependent hydrolases superfamily. TatD-type hydrolase family. TatD subfamily. As to quaternary structure, monomer. Mg(2+) is required as a cofactor.

It is found in the cytoplasm. Its function is as follows. 3'-5' exonuclease that prefers single-stranded DNA and RNA. May play a role in the H(2)O(2)-induced DNA damage repair. This is 3'-5' ssDNA/RNA exonuclease TatD from Pantoea sp. (strain At-9b).